Here is a 648-residue protein sequence, read N- to C-terminus: Threonine--tRNA ligase (648 aa).

Residues methionine 1–threonine 63 form the TGS domain. Residues aspartate 247–proline 544 are catalytic. Zn(2+) is bound by residues cysteine 344, histidine 395, and histidine 521.

This sequence belongs to the class-II aminoacyl-tRNA synthetase family. In terms of assembly, homodimer. It depends on Zn(2+) as a cofactor.

The protein localises to the cytoplasm. The catalysed reaction is tRNA(Thr) + L-threonine + ATP = L-threonyl-tRNA(Thr) + AMP + diphosphate + H(+). In terms of biological role, catalyzes the attachment of threonine to tRNA(Thr) in a two-step reaction: L-threonine is first activated by ATP to form Thr-AMP and then transferred to the acceptor end of tRNA(Thr). Also edits incorrectly charged L-seryl-tRNA(Thr). The protein is Threonine--tRNA ligase of Roseobacter denitrificans (strain ATCC 33942 / OCh 114) (Erythrobacter sp. (strain OCh 114)).